The primary structure comprises 1207 residues: DNA-directed RNA polymerase subunit beta' (1207 aa).

Cys60, Cys62, Cys75, and Cys78 together coordinate Zn(2+). Mg(2+) is bound by residues Asp450, Asp452, and Asp454. Zn(2+)-binding residues include Cys818, Cys892, Cys899, and Cys902.

This sequence belongs to the RNA polymerase beta' chain family. As to quaternary structure, the RNAP catalytic core consists of 2 alpha, 1 beta, 1 beta' and 1 omega subunit. When a sigma factor is associated with the core the holoenzyme is formed, which can initiate transcription. Mg(2+) serves as cofactor. It depends on Zn(2+) as a cofactor.

The catalysed reaction is RNA(n) + a ribonucleoside 5'-triphosphate = RNA(n+1) + diphosphate. In terms of biological role, DNA-dependent RNA polymerase catalyzes the transcription of DNA into RNA using the four ribonucleoside triphosphates as substrates. This Lactococcus lactis subsp. cremoris (strain SK11) protein is DNA-directed RNA polymerase subunit beta'.